The chain runs to 471 residues: UDP-N-acetylmuramoylalanine--D-glutamate ligase (471 aa).

Residue G120–T126 coordinates ATP.

Belongs to the MurCDEF family.

It localises to the cytoplasm. It catalyses the reaction UDP-N-acetyl-alpha-D-muramoyl-L-alanine + D-glutamate + ATP = UDP-N-acetyl-alpha-D-muramoyl-L-alanyl-D-glutamate + ADP + phosphate + H(+). It participates in cell wall biogenesis; peptidoglycan biosynthesis. In terms of biological role, cell wall formation. Catalyzes the addition of glutamate to the nucleotide precursor UDP-N-acetylmuramoyl-L-alanine (UMA). The protein is UDP-N-acetylmuramoylalanine--D-glutamate ligase of Nitrosomonas europaea (strain ATCC 19718 / CIP 103999 / KCTC 2705 / NBRC 14298).